A 159-amino-acid chain; its full sequence is Small ribosomal subunit protein bS6 (159 aa).

2 non-standard amino acids (selenocysteine) are found at residues Sec-46 and Sec-52.

Belongs to the bacterial ribosomal protein bS6 family.

Its function is as follows. Binds together with bS18 to 16S ribosomal RNA. The chain is Small ribosomal subunit protein bS6 from Desulfotalea psychrophila (strain LSv54 / DSM 12343).